The chain runs to 407 residues: Probable tRNA sulfurtransferase (407 aa).

Residues 61–165 (EEMCNRLKKV…LDAIYMYDQV (105 aa)) form the THUMP domain. Residues 183-184 (ML), 208-209 (HF), arginine 265, glycine 287, and glutamine 296 contribute to the ATP site.

The protein belongs to the ThiI family.

The protein resides in the cytoplasm. It catalyses the reaction [ThiI sulfur-carrier protein]-S-sulfanyl-L-cysteine + a uridine in tRNA + 2 reduced [2Fe-2S]-[ferredoxin] + ATP + H(+) = [ThiI sulfur-carrier protein]-L-cysteine + a 4-thiouridine in tRNA + 2 oxidized [2Fe-2S]-[ferredoxin] + AMP + diphosphate. The catalysed reaction is [ThiS sulfur-carrier protein]-C-terminal Gly-Gly-AMP + S-sulfanyl-L-cysteinyl-[cysteine desulfurase] + AH2 = [ThiS sulfur-carrier protein]-C-terminal-Gly-aminoethanethioate + L-cysteinyl-[cysteine desulfurase] + A + AMP + 2 H(+). The protein operates within cofactor biosynthesis; thiamine diphosphate biosynthesis. Its function is as follows. Catalyzes the ATP-dependent transfer of a sulfur to tRNA to produce 4-thiouridine in position 8 of tRNAs, which functions as a near-UV photosensor. Also catalyzes the transfer of sulfur to the sulfur carrier protein ThiS, forming ThiS-thiocarboxylate. This is a step in the synthesis of thiazole, in the thiamine biosynthesis pathway. The sulfur is donated as persulfide by IscS. This Staphylococcus saprophyticus subsp. saprophyticus (strain ATCC 15305 / DSM 20229 / NCIMB 8711 / NCTC 7292 / S-41) protein is Probable tRNA sulfurtransferase.